A 236-amino-acid polypeptide reads, in one-letter code: 15,16-dihydrobiliverdin:ferredoxin oxidoreductase (236 aa).

It belongs to the HY2 family.

The enzyme catalyses 15,16-dihydrobiliverdin + oxidized 2[4Fe-4S]-[ferredoxin] = biliverdin IXalpha + reduced 2[4Fe-4S]-[ferredoxin] + 2 H(+). Functionally, catalyzes the two-electron reduction of biliverdin IX-alpha at the C15 methine bridge. The sequence is that of 15,16-dihydrobiliverdin:ferredoxin oxidoreductase (pebA) from Synechococcus sp. (strain WH8020).